The following is a 198-amino-acid chain: Ribonuclease HII (198 aa).

Positions 10–198 (QLVAGVDEVG…PVKRALGLAS (189 aa)) constitute an RNase H type-2 domain. 3 residues coordinate a divalent metal cation: aspartate 16, glutamate 17, and aspartate 108.

Belongs to the RNase HII family. Requires Mn(2+) as cofactor. Mg(2+) is required as a cofactor.

Its subcellular location is the cytoplasm. The catalysed reaction is Endonucleolytic cleavage to 5'-phosphomonoester.. Its function is as follows. Endonuclease that specifically degrades the RNA of RNA-DNA hybrids. This chain is Ribonuclease HII, found in Escherichia fergusonii (strain ATCC 35469 / DSM 13698 / CCUG 18766 / IAM 14443 / JCM 21226 / LMG 7866 / NBRC 102419 / NCTC 12128 / CDC 0568-73).